The primary structure comprises 81 residues: Photosystem I iron-sulfur center (81 aa).

2 4Fe-4S ferredoxin-type domains span residues 2 to 31 and 39 to 68; these read AHSV…MVPW and IASA…VRVY. [4Fe-4S] cluster contacts are provided by Cys11, Cys14, Cys17, Cys21, Cys48, Cys51, Cys54, and Cys58.

The eukaryotic PSI reaction center is composed of at least 11 subunits. The cofactor is [4Fe-4S] cluster.

The protein localises to the plastid. Its subcellular location is the chloroplast thylakoid membrane. The catalysed reaction is reduced [plastocyanin] + hnu + oxidized [2Fe-2S]-[ferredoxin] = oxidized [plastocyanin] + reduced [2Fe-2S]-[ferredoxin]. Functionally, apoprotein for the two 4Fe-4S centers FA and FB of photosystem I (PSI); essential for photochemical activity. FB is the terminal electron acceptor of PSI, donating electrons to ferredoxin. The C-terminus interacts with PsaA/B/D and helps assemble the protein into the PSI complex. Required for binding of PsaD and PsaE to PSI. PSI is a plastocyanin-ferredoxin oxidoreductase, converting photonic excitation into a charge separation, which transfers an electron from the donor P700 chlorophyll pair to the spectroscopically characterized acceptors A0, A1, FX, FA and FB in turn. In Physcomitrium patens (Spreading-leaved earth moss), this protein is Photosystem I iron-sulfur center.